A 647-amino-acid chain; its full sequence is Threonine--tRNA ligase (647 aa).

Residues 1-61 (MINITFPDGA…TEDGSIEIVT (61 aa)) form the TGS domain. The tract at residues 242–540 (DHRKLGKELD…LIENYKGAFP (299 aa)) is catalytic. Cysteine 336, histidine 387, and histidine 517 together coordinate Zn(2+).

This sequence belongs to the class-II aminoacyl-tRNA synthetase family. Homodimer. The cofactor is Zn(2+).

The protein resides in the cytoplasm. The catalysed reaction is tRNA(Thr) + L-threonine + ATP = L-threonyl-tRNA(Thr) + AMP + diphosphate + H(+). Catalyzes the attachment of threonine to tRNA(Thr) in a two-step reaction: L-threonine is first activated by ATP to form Thr-AMP and then transferred to the acceptor end of tRNA(Thr). Also edits incorrectly charged L-seryl-tRNA(Thr). This Streptococcus pneumoniae serotype 4 (strain ATCC BAA-334 / TIGR4) protein is Threonine--tRNA ligase.